A 312-amino-acid chain; its full sequence is Homoserine O-acetyltransferase (312 aa).

C142 serves as the catalytic Acyl-thioester intermediate. 2 residues coordinate substrate: K163 and S192. The Proton acceptor role is filled by H235. E237 is an active-site residue. R249 provides a ligand contact to substrate.

The protein belongs to the MetA family.

The protein resides in the cytoplasm. The enzyme catalyses L-homoserine + acetyl-CoA = O-acetyl-L-homoserine + CoA. Its pathway is amino-acid biosynthesis; L-methionine biosynthesis via de novo pathway; O-acetyl-L-homoserine from L-homoserine: step 1/1. Transfers an acetyl group from acetyl-CoA to L-homoserine, forming acetyl-L-homoserine. The protein is Homoserine O-acetyltransferase of Ruegeria sp. (strain TM1040) (Silicibacter sp.).